The chain runs to 282 residues: Nucleotide-binding protein Fnod_1159 (282 aa).

ATP is bound at residue 9–16; that stretch reads GHSGAGKS. 57-60 is a binding site for GTP; it reads DIRS.

The protein belongs to the RapZ-like family.

Displays ATPase and GTPase activities. The chain is Nucleotide-binding protein Fnod_1159 from Fervidobacterium nodosum (strain ATCC 35602 / DSM 5306 / Rt17-B1).